A 284-amino-acid chain; its full sequence is D-tagatose-1,6-bisphosphate aldolase subunit GatY (284 aa).

Asp-82 (proton donor) is an active-site residue. Zn(2+) is bound by residues His-83 and His-180. Gly-181 serves as a coordination point for dihydroxyacetone phosphate. His-208 serves as a coordination point for Zn(2+). Dihydroxyacetone phosphate is bound by residues 209–211 (GAS) and 230–233 (NVAT).

The protein belongs to the class II fructose-bisphosphate aldolase family. TagBP aldolase GatY subfamily. As to quaternary structure, forms a complex with GatZ. The cofactor is Zn(2+).

The catalysed reaction is D-tagatofuranose 1,6-bisphosphate = D-glyceraldehyde 3-phosphate + dihydroxyacetone phosphate. It functions in the pathway carbohydrate metabolism; D-tagatose 6-phosphate degradation; D-glyceraldehyde 3-phosphate and glycerone phosphate from D-tagatose 6-phosphate: step 2/2. Its function is as follows. Catalytic subunit of the tagatose-1,6-bisphosphate aldolase GatYZ, which catalyzes the reversible aldol condensation of dihydroxyacetone phosphate (DHAP or glycerone-phosphate) with glyceraldehyde 3-phosphate (G3P) to produce tagatose 1,6-bisphosphate (TBP). Requires GatZ subunit for full activity and stability. Is involved in the catabolism of galactitol. In Salmonella enteritidis PT4 (strain P125109), this protein is D-tagatose-1,6-bisphosphate aldolase subunit GatY.